Reading from the N-terminus, the 143-residue chain is Large ribosomal subunit protein uL13 (143 aa).

Belongs to the universal ribosomal protein uL13 family. As to quaternary structure, part of the 50S ribosomal subunit.

Its function is as follows. This protein is one of the early assembly proteins of the 50S ribosomal subunit, although it is not seen to bind rRNA by itself. It is important during the early stages of 50S assembly. This Symbiobacterium thermophilum (strain DSM 24528 / JCM 14929 / IAM 14863 / T) protein is Large ribosomal subunit protein uL13.